Consider the following 504-residue polypeptide: Chromosomal replication initiator protein DnaA (504 aa).

The segment at 1-109 (MTADPDPPFV…PTDEPEDAPD (109 aa)) is domain I, interacts with DnaA modulators. A disordered region spans residues 98-162 (ATPTDEPEDA…PDTSSDDSNA (65 aa)). Over residues 109–125 (DSFADSPAPASVPAGPA) the composition is skewed to low complexity. The interval 110 to 163 (SFADSPAPASVPAGPADADEIDDDRDARVNAQESWPKYFSRPEPDTSSDDSNAV) is domain II. The segment at 164-380 (NLNRRYTFDT…GALIRVTAFA (217 aa)) is domain III, AAA+ region. Positions 208, 210, 211, and 212 each coordinate ATP. The domain IV, binds dsDNA stretch occupies residues 381 to 504 (SLNKTRIDRS…TTRIRQRAKR (124 aa)).

The protein belongs to the DnaA family. As to quaternary structure, oligomerizes as a right-handed, spiral filament on DNA at oriC.

The protein localises to the cytoplasm. Functionally, plays an essential role in the initiation and regulation of chromosomal replication. ATP-DnaA binds to the origin of replication (oriC) to initiate formation of the DNA replication initiation complex once per cell cycle. Binds the DnaA box (a 9 base pair repeat at the origin) and separates the double-stranded (ds)DNA. Forms a right-handed helical filament on oriC DNA; dsDNA binds to the exterior of the filament while single-stranded (ss)DNA is stabiized in the filament's interior. The ATP-DnaA-oriC complex binds and stabilizes one strand of the AT-rich DNA unwinding element (DUE), permitting loading of DNA polymerase. After initiation quickly degrades to an ADP-DnaA complex that is not apt for DNA replication. Binds acidic phospholipids. Its function is as follows. The probable consensus sequence for the DnaA box of this bacterium is 5'-TT(G/C)TCCACA-3'. In Mycolicibacterium smegmatis (strain ATCC 700084 / mc(2)155) (Mycobacterium smegmatis), this protein is Chromosomal replication initiator protein DnaA.